The chain runs to 96 residues: Co-chaperonin GroES (96 aa).

Belongs to the GroES chaperonin family. In terms of assembly, heptamer of 7 subunits arranged in a ring. Interacts with the chaperonin GroEL.

The protein localises to the cytoplasm. Its function is as follows. Together with the chaperonin GroEL, plays an essential role in assisting protein folding. The GroEL-GroES system forms a nano-cage that allows encapsulation of the non-native substrate proteins and provides a physical environment optimized to promote and accelerate protein folding. GroES binds to the apical surface of the GroEL ring, thereby capping the opening of the GroEL channel. This is Co-chaperonin GroES from Pelagibacter ubique (strain HTCC1062).